The sequence spans 358 residues: Probable undecaprenyl-phosphate N-acetylglucosaminyl 1-phosphate transferase (358 aa).

11 helical membrane-spanning segments follow: residues 10-32 (VVAF…RIAI), 53-72 (MGGL…SGIY), 76-93 (RMTA…LGIL), 105-127 (FLIQ…FFSV), 137-157 (GWMA…AINL), 164-181 (LAAG…VMAL), 186-205 (VLIL…FLFY), 218-235 (GSLF…LGLY), 240-262 (LFSI…FAII), 292-311 (MSVL…AIVL), and 316-338 (IWLS…EVTG).

It belongs to the glycosyltransferase 4 family. Mg(2+) serves as cofactor. Mn(2+) is required as a cofactor.

The protein localises to the cell membrane. The enzyme catalyses di-trans,octa-cis-undecaprenyl phosphate + UDP-N-acetyl-alpha-D-glucosamine = N-acetyl-alpha-D-glucosaminyl-di-trans,octa-cis-undecaprenyl diphosphate + UMP. It participates in cell wall biogenesis; poly(glucopyranosyl N-acetylgalactosamine 1-phosphate) teichoic acid biosynthesis. It functions in the pathway cell wall biogenesis; poly(glycerol phosphate) teichoic acid biosynthesis. In terms of biological role, catalyzes the formation of undecaprenyl-PP-N-acetylglucosamine. Involved in the synthesis of anionic cell-wall polymers as it mediates the initiation of the linkage unit formation that appears to be common to the two types of teichoic acids attached to the peptidoglycan of B.subtilis; may also be involved in teichuronic acid biosynthesis. This Bacillus subtilis (strain 168) protein is Probable undecaprenyl-phosphate N-acetylglucosaminyl 1-phosphate transferase (tagO).